Here is a 269-residue protein sequence, read N- to C-terminus: Malonyl-[acyl-carrier protein] O-methyltransferase (269 aa).

It belongs to the methyltransferase superfamily.

It carries out the reaction malonyl-[ACP] + S-adenosyl-L-methionine = malonyl-[ACP] methyl ester + S-adenosyl-L-homocysteine. It participates in cofactor biosynthesis; biotin biosynthesis. In terms of biological role, converts the free carboxyl group of a malonyl-thioester to its methyl ester by transfer of a methyl group from S-adenosyl-L-methionine (SAM). It allows to synthesize pimeloyl-ACP via the fatty acid synthetic pathway. This Bacillus anthracis protein is Malonyl-[acyl-carrier protein] O-methyltransferase.